A 931-amino-acid polypeptide reads, in one-letter code: Isoleucine--tRNA ligase (931 aa).

Polar residues predominate over residues 1-14; the sequence is MDYSKTLNLPQTQF. The disordered stretch occupies residues 1 to 25; the sequence is MDYSKTLNLPQTQFPMRGNLPQREP. Positions 57–67 match the 'HIGH' region motif; the sequence is PYANGHIHLGH. An L-isoleucyl-5'-AMP-binding site is contributed by E559. Positions 600–604 match the 'KMSKS' region motif; it reads KMSKS. K603 provides a ligand contact to ATP. C898, C901, C918, and C921 together coordinate Zn(2+).

This sequence belongs to the class-I aminoacyl-tRNA synthetase family. IleS type 1 subfamily. As to quaternary structure, monomer. The cofactor is Zn(2+).

Its subcellular location is the cytoplasm. The enzyme catalyses tRNA(Ile) + L-isoleucine + ATP = L-isoleucyl-tRNA(Ile) + AMP + diphosphate. Functionally, catalyzes the attachment of isoleucine to tRNA(Ile). As IleRS can inadvertently accommodate and process structurally similar amino acids such as valine, to avoid such errors it has two additional distinct tRNA(Ile)-dependent editing activities. One activity is designated as 'pretransfer' editing and involves the hydrolysis of activated Val-AMP. The other activity is designated 'posttransfer' editing and involves deacylation of mischarged Val-tRNA(Ile). This is Isoleucine--tRNA ligase from Desulforamulus reducens (strain ATCC BAA-1160 / DSM 100696 / MI-1) (Desulfotomaculum reducens).